Reading from the N-terminus, the 264-residue chain is Regulatory protein RecX (264 aa).

The protein belongs to the RecX family.

Its subcellular location is the cytoplasm. Functionally, modulates RecA activity. This chain is Regulatory protein RecX, found in Lacticaseibacillus casei (strain BL23) (Lactobacillus casei).